A 455-amino-acid chain; its full sequence is Glycylpeptide N-tetradecanoyltransferase (455 aa).

38–41 (HKFW) is a binding site for tetradecanoyl-CoA. The myristoyl CoA-binding stretch occupies residues 168–204 (INFLCVHKQLRSKRLTPVLIKEITRRVNKCDIWHALY). The Proton acceptor; via carboxylate role is filled by L455.

Belongs to the NMT family. In terms of assembly, monomer. In terms of processing, the N-terminus is blocked.

It localises to the cytoplasm. The catalysed reaction is N-terminal glycyl-[protein] + tetradecanoyl-CoA = N-tetradecanoylglycyl-[protein] + CoA + H(+). Inhibited by diethylpyrocarbonate. Competitively inhibited by S-(2-oxo)pentadecyl-CoA, a non hydrolysable myristoyl-CoA analog, and by SC-58272, a peptidomimetic derived from the N-terminal sequence of a natural substrate. Its function is as follows. Adds a myristoyl group to the N-terminal glycine residue of certain cellular proteins. Substrate specificity requires an N-terminal glycine in the nascent polypeptide substrates. Uncharged amino acids are preferred at position 2 while neutral residues are favored at positions 3 and 4. Ser is present at position 5 in almost all known N-myristoyl proteins and Lys is commonly encountered at postion 6. The protein is Glycylpeptide N-tetradecanoyltransferase (NMT1) of Saccharomyces cerevisiae (strain ATCC 204508 / S288c) (Baker's yeast).